The primary structure comprises 653 residues: Translation factor GUF1, mitochondrial (653 aa).

Residues 56-236 (ENYRNFSIVA…SIIKNIPAPN (181 aa)) enclose the tr-type G domain. GTP is bound by residues 65-72 (AHVDHGKS), 129-133 (DTPGH), and 183-186 (NKID).

The protein belongs to the TRAFAC class translation factor GTPase superfamily. Classic translation factor GTPase family. LepA subfamily.

It localises to the mitochondrion inner membrane. It catalyses the reaction GTP + H2O = GDP + phosphate + H(+). Promotes mitochondrial protein synthesis. May act as a fidelity factor of the translation reaction, by catalyzing a one-codon backward translocation of tRNAs on improperly translocated ribosomes. Binds to mitochondrial ribosomes in a GTP-dependent manner. This is Translation factor GUF1, mitochondrial from Candida tropicalis (strain ATCC MYA-3404 / T1) (Yeast).